The primary structure comprises 131 residues: D-ribose pyranase (131 aa).

Catalysis depends on H20, which acts as the Proton donor. Residues D28, H98, and 120-122 (YAN) each bind substrate.

The protein belongs to the RbsD / FucU family. RbsD subfamily. In terms of assembly, homodecamer.

Its subcellular location is the cytoplasm. The catalysed reaction is beta-D-ribopyranose = beta-D-ribofuranose. It participates in carbohydrate metabolism; D-ribose degradation; D-ribose 5-phosphate from beta-D-ribopyranose: step 1/2. Functionally, catalyzes the interconversion of beta-pyran and beta-furan forms of D-ribose. The protein is D-ribose pyranase of Chloroflexus aggregans (strain MD-66 / DSM 9485).